The chain runs to 174 residues: Cytochrome c oxidase subunit 5A, mitochondrial (174 aa).

The N-terminal 29 residues, 1–29 (MASLTRAVTRLAIAGRQAVRTIATTTPVS), are a transit peptide targeting the mitochondrion.

Belongs to the cytochrome c oxidase subunit 5A family. In terms of assembly, component of the cytochrome c oxidase (complex IV, CIV), a multisubunit enzyme composed of a catalytic core of 3 subunits and several supernumerary subunits. The complex exists as a monomer or a dimer and forms supercomplexes (SCs) in the inner mitochondrial membrane with ubiquinol-cytochrome c oxidoreductase (cytochrome b-c1 complex, complex III, CIII).

Its subcellular location is the mitochondrion inner membrane. Its pathway is energy metabolism; oxidative phosphorylation. Component of the cytochrome c oxidase, the last enzyme in the mitochondrial electron transport chain which drives oxidative phosphorylation. The respiratory chain contains 3 multisubunit complexes succinate dehydrogenase (complex II, CII), ubiquinol-cytochrome c oxidoreductase (cytochrome b-c1 complex, complex III, CIII) and cytochrome c oxidase (complex IV, CIV), that cooperate to transfer electrons derived from NADH and succinate to molecular oxygen, creating an electrochemical gradient over the inner membrane that drives transmembrane transport and the ATP synthase. Cytochrome c oxidase is the component of the respiratory chain that catalyzes the reduction of oxygen to water. Electrons originating from reduced cytochrome c in the intermembrane space (IMS) are transferred via the dinuclear copper A center (CU(A)) of subunit 2 and heme A of subunit 1 to the active site in subunit 1, a binuclear center (BNC) formed by heme A3 and copper B (CU(B)). The BNC reduces molecular oxygen to 2 water molecules using 4 electrons from cytochrome c in the IMS and 4 protons from the mitochondrial matrix. The sequence is that of Cytochrome c oxidase subunit 5A, mitochondrial from Caenorhabditis elegans.